The following is a 716-amino-acid chain: Beta-1,2-glucosyltransferase (716 aa).

Sophorose is bound by residues Y52, I99, A101, E102, N175, E176, G278, W279, E343, and R349. E176 functions as the Proton donor/acceptor in the catalytic mechanism. Residues E176, G278, and W279 each coordinate beta-D-glucose. The active-site Nucleophile is the E343. 3 residues coordinate beta-D-glucose: R349, K358, and E361. Residue Y378 participates in sophorose binding. Beta-D-glucose contacts are provided by S708 and Y709.

Belongs to the glycosyl hydrolase 35 family. In terms of assembly, homidimer.

Its subcellular location is the cytoplasm. The catalysed reaction is a D-glucoside + [(1-&gt;2)-beta-D-glucosyl](n) = a beta-D-glucosyl-(1-&gt;2)-D-glucoside + [(1-&gt;2)-beta-D-glucosyl](n-1). Glycosyltransferase acting on beta-1,2-glucooligosaccharides. Catalyzes the transfer of a glucosyl residue from the non-reducing end of a 1,2-beta-D-glucan to a glucose residue of an acceptor molecule, forming a beta-1,2-glucosidic bond. The beta-1,2-linked glucose dimer sophorose is the preferred donor in vitro. Has a very broad specificity for the acceptor and can act on various aryl- and alkyl-glucosides. Does not show any hydrolytic activity. In Ignavibacterium album (strain DSM 19864 / JCM 16511 / NBRC 101810 / Mat9-16), this protein is Beta-1,2-glucosyltransferase.